The primary structure comprises 118 residues: Small ribosomal subunit protein uS12cz/uS12cy (118 aa).

This sequence belongs to the universal ribosomal protein uS12 family. As to quaternary structure, part of the 30S ribosomal subunit.

Its subcellular location is the plastid. It localises to the chloroplast. With S4 and S5 plays an important role in translational accuracy. Located at the interface of the 30S and 50S subunits. The sequence is that of Small ribosomal subunit protein uS12cz/uS12cy (rps12-A) from Helianthus annuus (Common sunflower).